The primary structure comprises 101 residues: Toxin Tpa8 (101 aa).

An N-terminal signal peptide occupies residues Met1 to Val20. One can recognise an LCN-type CS-alpha/beta domain in the interval Lys24–Glu98. Cystine bridges form between Cys44-Cys70, Cys56-Cys75, Cys60-Cys77, and Cys71-Cys97.

It belongs to the long (4 C-C) scorpion toxin superfamily. Sodium channel inhibitor family. Beta subfamily. In terms of tissue distribution, expressed by the venom gland.

It localises to the secreted. Its function is as follows. Excitatory insect beta-toxins induce a spastic paralysis. They bind voltage-independently at site-4 of sodium channels (Nav) and shift the voltage of activation toward more negative potentials thereby affecting sodium channel activation and promoting spontaneous and repetitive firing. In Tityus pachyurus (Colombian scorpion), this protein is Toxin Tpa8.